The following is a 439-amino-acid chain: MKPTVAIVGRPNVGKSTLFNRLIGERRAIVDDTPGITRDRIVGETEWRGITFNVIDTGGIEPYSEDIILKQMRRQAQFAIDMSDVIIFMVDGKTGLTDADREVANMLRVSKKPIVLAVNKIDNISEQPIIYEFYELGLSDPIPMSAEHGSGVGDVLDAVVSYFDKVGINEIEEDSIKVAIIGKPNTGKSSLVNYILGEERVIVSDIPGTTRDAIDSYVEFEGIPLTLIDTAGLRRKSKIYDNIERYSMLRTISAIERSDICVILLDGTEPVSEQDAKIAGYAYEAGKGCIIAVNKWDAVEKDEKTADEYKKQIEEKLSFLKFAPVLFISAKTGFRVKKLLETVLYVYGNYTRRITTGQINDVLAEATTIYQPPSDKGKQLKIYYMTQVGEKPPKMAIFVNDKDLFHFSYQRYIENYLRKTFDFTGVPIVFLIREKGEKD.

EngA-type G domains follow at residues 3 to 167 (PTVA…DKVG) and 176 to 351 (IKVA…GNYT). GTP is bound by residues 9–16 (GRPNVGKS), 56–60 (DTGGI), 119–122 (NKID), 182–189 (GKPNTGKS), 229–233 (DTAGL), and 294–297 (NKWD). A KH-like domain is found at 352-436 (RRITTGQIND…PIVFLIREKG (85 aa)).

Belongs to the TRAFAC class TrmE-Era-EngA-EngB-Septin-like GTPase superfamily. EngA (Der) GTPase family. As to quaternary structure, associates with the 50S ribosomal subunit.

In terms of biological role, GTPase that plays an essential role in the late steps of ribosome biogenesis. This is GTPase Der from Caldicellulosiruptor saccharolyticus (strain ATCC 43494 / DSM 8903 / Tp8T 6331).